The sequence spans 189 residues: Chitin synthase 1 (189 aa).

It belongs to the chitin synthase family.

Its subcellular location is the cell membrane. The catalysed reaction is [(1-&gt;4)-N-acetyl-beta-D-glucosaminyl](n) + UDP-N-acetyl-alpha-D-glucosamine = [(1-&gt;4)-N-acetyl-beta-D-glucosaminyl](n+1) + UDP + H(+). Polymerizes chitin, a structural polymer of the cell wall and septum, by transferring the sugar moiety of UDP-GlcNAc to the non-reducing end of the growing chitin polymer. The protein is Chitin synthase 1 (CHS1) of Schizophyllum commune (Split gill fungus).